A 317-amino-acid polypeptide reads, in one-letter code: Tetraspanin-15 (317 aa).

A disordered region spans residues Met1 to Asn43. Over Met1–Gly60 the chain is Cytoplasmic. The span at Val7 to Glu28 shows a compositional bias: low complexity. A helical membrane pass occupies residues Val61 to Leu81. Topologically, residues Tyr82–Arg96 are extracellular. The helical transmembrane segment at Val97 to Phe117 threads the bilayer. At Leu118–Ala126 the chain is on the cytoplasmic side. A helical transmembrane segment spans residues Leu127–Val147. The Extracellular portion of the chain corresponds to Asn148–Gln287. Asn224 carries N-linked (GlcNAc...) asparagine glycosylation. Residues Leu288–Leu308 form a helical membrane-spanning segment. Over Ala309 to Gly317 the chain is Cytoplasmic.

It belongs to the tetraspanin (TM4SF) family.

It is found in the membrane. In terms of biological role, may be involved in the regulation of cell differentiation. This is Tetraspanin-15 (TET15) from Arabidopsis thaliana (Mouse-ear cress).